Here is a 96-residue protein sequence, read N- to C-terminus: uncharacterized protein (96 aa).

Asparagine 4 carries an N-linked (GlcNAc...) asparagine glycan. Residues 59–81 (VFFTIFDTIITIIVRSGIPFPLL) form a helical membrane-spanning segment.

Its subcellular location is the membrane. This is an uncharacterized protein from Saccharomyces cerevisiae (strain ATCC 204508 / S288c) (Baker's yeast).